We begin with the raw amino-acid sequence, 473 residues long: GTPase Der (473 aa).

EngA-type G domains lie at 3-167 and 203-378; these read FTVA…GKDR and LRVA…RVWN. GTP-binding positions include 9 to 16, 56 to 60, 119 to 122, 209 to 216, 256 to 260, and 321 to 324; these read GRPNVGKS, DTAGL, NKSE, GRPNAGKS, DTAGM, and NKWD. The KH-like domain occupies 379–463; that stretch reads KRISTAKLNR…PIRIHFRSAE (85 aa).

The protein belongs to the TRAFAC class TrmE-Era-EngA-EngB-Septin-like GTPase superfamily. EngA (Der) GTPase family. Associates with the 50S ribosomal subunit.

Functionally, GTPase that plays an essential role in the late steps of ribosome biogenesis. This is GTPase Der from Rhizobium leguminosarum bv. trifolii (strain WSM2304).